Consider the following 46-residue polypeptide: Cysteine-rich venom protein asurin-1 (46 aa).

The protein belongs to the CRISP family. In terms of processing, contains 8 disulfide bonds. In terms of tissue distribution, expressed by the venom gland.

It is found in the secreted. Functionally, blocks contraction of smooth muscle elicited by high potassium-induced depolarization, but does not block caffeine-stimulated contraction. May target voltage-gated calcium channels on smooth muscle. This chain is Cysteine-rich venom protein asurin-1, found in Austrelaps superbus (Lowland copperhead snake).